A 574-amino-acid chain; its full sequence is Frizzled and smoothened-like protein G (574 aa).

A signal peptide spans 1–19; sequence MKSIIFITFFIFFLKKLNG. Topologically, residues 20-246 are extracellular; it reads LPNGYGVGLV…EKWNQIENLS (227 aa). The region spanning 30 to 181 is the FZ domain; it reads DPNGQCMNYI…GLYEVPCFNP (152 aa). Intrachain disulfides connect C35–C109, C48–C102, C91–C138, and C127–C178. N-linked (GlcNAc...) asparagine glycosylation is found at N119, N161, N187, N206, N233, and N244. Residues 247–267 traverse the membrane as a helical segment; the sequence is KVLSTISFVCSIYNILSFGIL. Topologically, residues 268-273 are cytoplasmic; it reads KKKKTK. Residues 274–294 form a helical membrane-spanning segment; sequence YTICISALSASVALINLGDII. Topologically, residues 295–324 are extracellular; the sequence is KIGVGYEKVLCPEPGRFATQVDDPLCGLTA. A helical membrane pass occupies residues 325 to 345; the sequence is ALFHVGICSTVLWTTTMAIYL. The Cytoplasmic segment spans residues 346–358; it reads YSAIKNIKLFKFR. A helical membrane pass occupies residues 359–379; that stretch reads YFIIFNTGFSLTSLIIAASAS. At 380–401 the chain is on the extracellular side; it reads KFEAGTGSIECWIRDRWYSICL. Residues 402 to 422 form a helical membrane-spanning segment; it reads FWLPCGICLLIGTICIASVIV. Residues 423–445 lie on the Cytoplasmic side of the membrane; it reads EIYKVSKNIKLSESETIMRQIKP. A helical membrane pass occupies residues 446-466; sequence IISVILVSGSFTYLFIIFFDI. Over 467-502 the chain is Extracellular; that stretch reads ERNFGGYRSAVTDYVLCLLNSTDNGIECHTSGPSYN. N486 carries an N-linked (GlcNAc...) asparagine glycan. Residues 503-523 form a helical membrane-spanning segment; that stretch reads PYFMFYFFMRFFGILFFLIYG. The Cytoplasmic segment spans residues 524-574; sequence TSKNARDSWYELFIKIKVSLSETSSTISNNSGGGSSQQKQQQQNEIKLEKI. Residues 550–568 are compositionally biased toward low complexity; sequence ISNNSGGGSSQQKQQQQNE. The disordered stretch occupies residues 550–574; that stretch reads ISNNSGGGSSQQKQQQQNEIKLEKI.

It belongs to the G-protein coupled receptor Fz/Smo family.

Its subcellular location is the membrane. In Dictyostelium discoideum (Social amoeba), this protein is Frizzled and smoothened-like protein G (fslG).